A 401-amino-acid chain; its full sequence is 8-amino-7-oxononanoate synthase (401 aa).

Residue R19 coordinates substrate. Pyridoxal 5'-phosphate is bound at residue 106–107 (GY). H131 contacts substrate. Pyridoxal 5'-phosphate contacts are provided by S176, H204, and T233. At K236 the chain carries N6-(pyridoxal phosphate)lysine. Substrate is bound at residue T350.

The protein belongs to the class-II pyridoxal-phosphate-dependent aminotransferase family. BioF subfamily. Homodimer. It depends on pyridoxal 5'-phosphate as a cofactor.

The catalysed reaction is 6-carboxyhexanoyl-[ACP] + L-alanine + H(+) = (8S)-8-amino-7-oxononanoate + holo-[ACP] + CO2. The protein operates within cofactor biosynthesis; biotin biosynthesis. Its function is as follows. Catalyzes the decarboxylative condensation of pimeloyl-[acyl-carrier protein] and L-alanine to produce 8-amino-7-oxononanoate (AON), [acyl-carrier protein], and carbon dioxide. This chain is 8-amino-7-oxononanoate synthase, found in Pseudomonas aeruginosa (strain LESB58).